The primary structure comprises 448 residues: UPF0210 protein PAE3581 (448 aa).

Belongs to the UPF0210 family.

The sequence is that of UPF0210 protein PAE3581 from Pyrobaculum aerophilum (strain ATCC 51768 / DSM 7523 / JCM 9630 / CIP 104966 / NBRC 100827 / IM2).